The chain runs to 330 residues: GTPase Obg (330 aa).

The 159-residue stretch at 1 to 159 folds into the Obg domain; it reads MHFIDEVKIY…MWIHLSLKLL (159 aa). The OBG-type G domain occupies 160–327; the sequence is SDVGLVGFPN…IVKLALETIK (168 aa). GTP-binding positions include 166 to 173, 191 to 195, 212 to 215, 279 to 282, and 308 to 310; these read GFPNAGKS, FTTLV, DIPG, NKCD, and STY. Mg(2+)-binding residues include Ser-173 and Thr-193.

This sequence belongs to the TRAFAC class OBG-HflX-like GTPase superfamily. OBG GTPase family. In terms of assembly, monomer. The cofactor is Mg(2+).

It is found in the cytoplasm. Its function is as follows. An essential GTPase which binds GTP, GDP and possibly (p)ppGpp with moderate affinity, with high nucleotide exchange rates and a fairly low GTP hydrolysis rate. Plays a role in control of the cell cycle, stress response, ribosome biogenesis and in those bacteria that undergo differentiation, in morphogenesis control. The protein is GTPase Obg of Rickettsia massiliae (strain Mtu5).